Consider the following 366-residue polypeptide: Galactoside alpha-(1,2)-fucosyltransferase 1 (366 aa).

Topologically, residues 1-8 (MWPLSHRH) are cytoplasmic. Residues 9–25 (LCLAFLLVCVLSAISFF) traverse the membrane as a helical; Signal-anchor for type II membrane protein segment. Residues 26–366 (LHIHQDSFPH…LSPLWTLAEP (341 aa)) are Lumenal-facing. Residues Asn-66, Asn-302, and Asn-328 are each glycosylated (N-linked (GlcNAc...) asparagine).

Belongs to the glycosyltransferase 11 family.

It is found in the golgi apparatus. The protein resides in the golgi stack membrane. It catalyses the reaction a beta-D-galactosyl-(1-&gt;4)-N-acetyl-beta-D-glucosaminyl derivative + GDP-beta-L-fucose = an alpha-L-Fuc-(1-&gt;2)-beta-D-Gal-(1-&gt;4)-beta-D-GlcNAc derivative + GDP + H(+). It carries out the reaction a ganglioside GA1 + GDP-beta-L-fucose = a ganglioside Fuc-GA1 + GDP + H(+). The catalysed reaction is a beta-D-Gal-(1-&gt;3)-beta-D-GlcNAc-(1-&gt;3)-beta-D-Gal-(1-&gt;4)-beta-D-Glc-(1&lt;-&gt;1')-Cer(d18:1(4E)) + GDP-beta-L-fucose = alpha-L-fucosyl-(1-&gt;2)- beta-D-galactosyl-(1-&gt;3)-N-acetyl-beta-D-glucosaminyl-(1-&gt;3)-beta-D-galactosyl-(1-&gt;4)-beta-D-glucosyl-(1&lt;-&gt;1')-N-acylsphing-4-enine + GDP + H(+). The enzyme catalyses a neolactoside nLc4Cer(d18:1(4E)) + GDP-beta-L-fucose = a neolactoside IV(2)-alpha-Fuc-nLc4Cer(d18:1(4E)) + GDP + H(+). It catalyses the reaction a ganglioside GM1 + GDP-beta-L-fucose = a ganglioside Fuc-GM1 + GDP + H(+). It carries out the reaction beta-D-galactosyl-(1-&gt;3)-N-acetyl-D-galactosamine + GDP-beta-L-fucose = alpha-L-fucosyl-(1-&gt;2)-beta-D-galactosyl-(1-&gt;3)-N-acetyl-D-galactosamine + GDP + H(+). It functions in the pathway protein modification; protein glycosylation. Functionally, catalyzes the transfer of L-fucose, from a guanosine diphosphate-beta-L-fucose, to the terminal galactose residue of glycoconjugates through an alpha(1,2) linkage leading to H antigen synthesis that is an intermediate substrate in the synthesis of ABO blood group antigens. H antigen is essential for maturation of the glomerular layer of the main olfactory bulb, in cell migration and early cell-cell contacts during tumor associated angiogenesis. Preferentially fucosylates soluble lactose and to a lesser extent fucosylates glycolipids gangliosides GA1 and GM1a. This is Galactoside alpha-(1,2)-fucosyltransferase 1 from Lagothrix lagotricha (Brown woolly monkey).